Consider the following 293-residue polypeptide: MATH domain and coiled-coil domain-containing protein At3g58400 (293 aa).

Positions 3 to 126 (RSRSQNLITE…NGELKIVAEI (124 aa)) constitute an MATH domain. Positions 227–285 (KLDWLENKLYEVAQKKEDDEAGETRLREMEEKLKDLKLKCSKMEALVEEEKAKVSAAKA) form a coiled coil.

The polypeptide is MATH domain and coiled-coil domain-containing protein At3g58400 (Arabidopsis thaliana (Mouse-ear cress)).